Reading from the N-terminus, the 94-residue chain is Phosphoribosyl-ATP pyrophosphatase (94 aa).

The protein belongs to the PRA-PH family.

Its subcellular location is the cytoplasm. It catalyses the reaction 1-(5-phospho-beta-D-ribosyl)-ATP + H2O = 1-(5-phospho-beta-D-ribosyl)-5'-AMP + diphosphate + H(+). It functions in the pathway amino-acid biosynthesis; L-histidine biosynthesis; L-histidine from 5-phospho-alpha-D-ribose 1-diphosphate: step 2/9. The protein is Phosphoribosyl-ATP pyrophosphatase of Saccharolobus islandicus (strain Y.N.15.51 / Yellowstone #2) (Sulfolobus islandicus).